Consider the following 286-residue polypeptide: Homoserine kinase (286 aa).

Position 78 to 88 (78 to 88 (PLARGLGSSSS)) interacts with ATP.

This sequence belongs to the GHMP kinase family. Homoserine kinase subfamily.

The protein resides in the cytoplasm. The enzyme catalyses L-homoserine + ATP = O-phospho-L-homoserine + ADP + H(+). It participates in amino-acid biosynthesis; L-threonine biosynthesis; L-threonine from L-aspartate: step 4/5. Functionally, catalyzes the ATP-dependent phosphorylation of L-homoserine to L-homoserine phosphate. The sequence is that of Homoserine kinase from Streptococcus equi subsp. equi (strain 4047).